We begin with the raw amino-acid sequence, 99 residues long: Putative septation protein SpoVG (99 aa).

Belongs to the SpoVG family.

Its function is as follows. Could be involved in septation. The polypeptide is Putative septation protein SpoVG (Aster yellows witches'-broom phytoplasma (strain AYWB)).